The chain runs to 47 residues: Large ribosomal subunit protein bL34 (47 aa).

The protein belongs to the bacterial ribosomal protein bL34 family.

This is Large ribosomal subunit protein bL34 from Mycobacterium sp. (strain JLS).